The primary structure comprises 250 residues: 5'-nucleotidase SurE (250 aa).

A divalent metal cation contacts are provided by Asp8, Asp9, Ser39, and Asn95.

Belongs to the SurE nucleotidase family. The cofactor is a divalent metal cation.

The protein localises to the cytoplasm. It carries out the reaction a ribonucleoside 5'-phosphate + H2O = a ribonucleoside + phosphate. Its function is as follows. Nucleotidase that shows phosphatase activity on nucleoside 5'-monophosphates. This Syntrophobacter fumaroxidans (strain DSM 10017 / MPOB) protein is 5'-nucleotidase SurE.